The chain runs to 212 residues: Ribonuclease HII (212 aa).

The RNase H type-2 domain maps to 2-206; it reads TPLVGVDEAG…CERIRAEAEQ (205 aa). Residues aspartate 8, glutamate 9, and aspartate 101 each contribute to the a divalent metal cation site.

Belongs to the RNase HII family. Mn(2+) is required as a cofactor. The cofactor is Mg(2+).

It localises to the cytoplasm. The enzyme catalyses Endonucleolytic cleavage to 5'-phosphomonoester.. Functionally, endonuclease that specifically degrades the RNA of RNA-DNA hybrids. The polypeptide is Ribonuclease HII (Natronomonas pharaonis (strain ATCC 35678 / DSM 2160 / CIP 103997 / JCM 8858 / NBRC 14720 / NCIMB 2260 / Gabara) (Halobacterium pharaonis)).